A 337-amino-acid chain; its full sequence is ERI1 exoribonuclease 3 (337 aa).

Residues 146-320 form the Exonuclease domain; sequence FLVLDFEATC…DDCKNIANIM (175 aa). Mg(2+)-binding residues include aspartate 150, glutamate 152, and aspartate 249. Glutamate 152 acts as the Proton acceptor in catalysis. Glutamate 152 is a binding site for AMP. The active-site Proton acceptor is histidine 307. Residue histidine 307 participates in AMP binding. A Mg(2+)-binding site is contributed by aspartate 312.

In terms of assembly, interacts with PRNP. Mg(2+) serves as cofactor. In terms of tissue distribution, highly expressed in the brain, heart, thyroid and testis. Expressed at low levels in the muscle cells, liver, pancreas and kidney.

This chain is ERI1 exoribonuclease 3 (Eri3), found in Mus musculus (Mouse).